Here is a 444-residue protein sequence, read N- to C-terminus: Light-independent protochlorophyllide reductase subunit N (444 aa).

Positions 36, 61, and 118 each coordinate [4Fe-4S] cluster.

This sequence belongs to the BchN/ChlN family. As to quaternary structure, protochlorophyllide reductase is composed of three subunits; BchL, BchN and BchB. Forms a heterotetramer of two BchB and two BchN subunits. [4Fe-4S] cluster is required as a cofactor.

It catalyses the reaction chlorophyllide a + oxidized 2[4Fe-4S]-[ferredoxin] + 2 ADP + 2 phosphate = protochlorophyllide a + reduced 2[4Fe-4S]-[ferredoxin] + 2 ATP + 2 H2O. The protein operates within porphyrin-containing compound metabolism; bacteriochlorophyll biosynthesis (light-independent). Functionally, component of the dark-operative protochlorophyllide reductase (DPOR) that uses Mg-ATP and reduced ferredoxin to reduce ring D of protochlorophyllide (Pchlide) to form chlorophyllide a (Chlide). This reaction is light-independent. The NB-protein (BchN-BchB) is the catalytic component of the complex. This Chloroflexus aurantiacus (strain ATCC 29366 / DSM 635 / J-10-fl) protein is Light-independent protochlorophyllide reductase subunit N.